We begin with the raw amino-acid sequence, 219 residues long: Segregation and condensation protein B (219 aa).

A disordered region spans residues 193–219 (SLFAGGEEPSAEAADGGAGESTHGEEE). Low complexity predominate over residues 196–207 (AGGEEPSAEAAD).

This sequence belongs to the ScpB family. Homodimer. Homodimerization may be required to stabilize the binding of ScpA to the Smc head domains. Component of a cohesin-like complex composed of ScpA, ScpB and the Smc homodimer, in which ScpA and ScpB bind to the head domain of Smc. The presence of the three proteins is required for the association of the complex with DNA.

It localises to the cytoplasm. Its function is as follows. Participates in chromosomal partition during cell division. May act via the formation of a condensin-like complex containing Smc and ScpA that pull DNA away from mid-cell into both cell halves. This Symbiobacterium thermophilum (strain DSM 24528 / JCM 14929 / IAM 14863 / T) protein is Segregation and condensation protein B.